We begin with the raw amino-acid sequence, 549 residues long: Chaperonin GroEL (549 aa).

ATP is bound by residues Thr-29–Pro-32, Lys-50, Asp-86–Thr-90, Gly-417, and Asp-499.

Belongs to the chaperonin (HSP60) family. In terms of assembly, forms a cylinder of 14 subunits composed of two heptameric rings stacked back-to-back. Interacts with the co-chaperonin GroES.

The protein resides in the cytoplasm. It catalyses the reaction ATP + H2O + a folded polypeptide = ADP + phosphate + an unfolded polypeptide.. In terms of biological role, together with its co-chaperonin GroES, plays an essential role in assisting protein folding. The GroEL-GroES system forms a nano-cage that allows encapsulation of the non-native substrate proteins and provides a physical environment optimized to promote and accelerate protein folding. The chain is Chaperonin GroEL from Anaplasma marginale (strain Florida).